Here is a 133-residue protein sequence, read N- to C-terminus: Small ribosomal subunit protein uS8 (133 aa).

The protein belongs to the universal ribosomal protein uS8 family. In terms of assembly, part of the 30S ribosomal subunit. Contacts proteins S5 and S12.

Its function is as follows. One of the primary rRNA binding proteins, it binds directly to 16S rRNA central domain where it helps coordinate assembly of the platform of the 30S subunit. The chain is Small ribosomal subunit protein uS8 from Prochlorococcus marinus (strain MIT 9301).